Reading from the N-terminus, the 246-residue chain is 4-hydroxy-tetrahydrodipicolinate reductase (246 aa).

Residue 7 to 12 (GCSGRM) coordinates NAD(+). Residue Arg-34 coordinates NADP(+). NAD(+) is bound by residues 76 to 78 (ATT) and 102 to 105 (CPNT). His-135 (proton donor/acceptor) is an active-site residue. Position 136 (His-136) interacts with (S)-2,3,4,5-tetrahydrodipicolinate. The Proton donor role is filled by Lys-139. A (S)-2,3,4,5-tetrahydrodipicolinate-binding site is contributed by 145 to 146 (GT).

It belongs to the DapB family.

The protein localises to the cytoplasm. The enzyme catalyses (S)-2,3,4,5-tetrahydrodipicolinate + NAD(+) + H2O = (2S,4S)-4-hydroxy-2,3,4,5-tetrahydrodipicolinate + NADH + H(+). The catalysed reaction is (S)-2,3,4,5-tetrahydrodipicolinate + NADP(+) + H2O = (2S,4S)-4-hydroxy-2,3,4,5-tetrahydrodipicolinate + NADPH + H(+). It functions in the pathway amino-acid biosynthesis; L-lysine biosynthesis via DAP pathway; (S)-tetrahydrodipicolinate from L-aspartate: step 4/4. In terms of biological role, catalyzes the conversion of 4-hydroxy-tetrahydrodipicolinate (HTPA) to tetrahydrodipicolinate. This chain is 4-hydroxy-tetrahydrodipicolinate reductase, found in Chlamydia felis (strain Fe/C-56) (Chlamydophila felis).